Consider the following 574-residue polypeptide: Kelch-like protein 35 (574 aa).

One can recognise a BTB domain in the interval 40 to 110; the sequence is TDVVLRAGGR…VYGAGVRLRA (71 aa). Residues 146 to 248 form the BACK domain; it reads SLALRRVAAA…APAYFLEKVE (103 aa). Kelch repeat units follow at residues 292 to 341, 343 to 385, 386 to 432, 434 to 480, 481 to 522, and 524 to 570; these read VIVV…ALRN, IYVS…ALQG, QLFA…PCAG, LYVI…SLED, TIYV…VCDG, and VHIL…TIVQ.

The sequence is that of Kelch-like protein 35 (Klhl35) from Mus musculus (Mouse).